The following is a 452-amino-acid chain: 2-succinylbenzoate--CoA ligase (452 aa).

The protein belongs to the ATP-dependent AMP-binding enzyme family. MenE subfamily.

It carries out the reaction 2-succinylbenzoate + ATP + CoA = 2-succinylbenzoyl-CoA + AMP + diphosphate. Its pathway is quinol/quinone metabolism; 1,4-dihydroxy-2-naphthoate biosynthesis; 1,4-dihydroxy-2-naphthoate from chorismate: step 5/7. The protein operates within quinol/quinone metabolism; menaquinone biosynthesis. Its function is as follows. Converts 2-succinylbenzoate (OSB) to 2-succinylbenzoyl-CoA (OSB-CoA). The polypeptide is 2-succinylbenzoate--CoA ligase (Haemophilus influenzae (strain ATCC 51907 / DSM 11121 / KW20 / Rd)).